A 1179-amino-acid chain; its full sequence is MYELNNFESIKIALASPEKIRQWSKGEVKKPETINYRTLKPEKEGLFCEKIFGPTKDWECHCGKYKRVRYKGVVCDRCGVEVTKSKVRRERMGHIELAAPVSHIWYFKGIPSRMGLLLDMSPRSLEKVLYFAAYIVIDPGETGLTEKQVLTEKEYSEAIEKYGSGSFKAGMGAESVKKLLENIDLEELYKDLRSKLKESTGQKRIRTIRRLEVVDAFKHSGNKPEWMILDVIPVIPPELRPMVQLDGGRFATSDLNDLYRRVINRNNRLKRLLDLGAPDIIVRNEKRMLQEAVDALIDNGRRGKPVTGPGNRPLKSLSDMLKGKQGRFRQNLLGKRVDYSGRSVIVVGPELKFYQCGLPKKMALELFKPFVMKKLVEDNHAHNIKSAKRMVEKVKPEVWDVLEEVIREHPVLLNRAPTLHRLGIQAFEPVLVEGKAIKLHPLVCTAYNADFDGDQMAVHVPLSVEAQAEARFLMLAPNNILAPKDGQPITTPTQDMILGSYYLTIEQEGVQGEGMIFKDHDEMLMAYANKAVHLHARVKVRRKLHPEDKGRLVESTVGRFIFNEEIPQNLGFVDRKKDPYALEVDFLCDKKALGKVIDKCFRKHGNTITAIMLDYIKKTGFRYSTQGAITIAVGDMEVPKEKGELISLAEEKVDKYEKAFRRGLISDEERYEKVIETWSETTEKVTEALMATLGSMNNMFIMAHSGARGSKNQIRQLGGMRGLMANATGKTVEIPIKANFREGLTVLEYFISTHGARKGLADTALRTADSGYLTRRLVDVSQDVIIREIDCGSQEGSNIKALKDGNEVIEELYDRIVGRYTLEEVIHPETGEVMIGKNEMILEDMAEEICALGIESVKIRSALKCQTRHGVCAHCYGRNLATGEAVKVGEAVGIIAAQSIGEPGTQLTMRTFHTGGVAGADITQGLPRVEELFEARKPKGLAIISELSGTVKVVETKKKREVIVTDEHGESNTYTIPYGSRMKVRDGEFVELGDEITDGSVNPHDILRIKDVAGVQNYIIKEVQRVYRLQGVDINDKHIEVIVRQMLNKVKIEEAGDTNLLPGSLETIFKYEEENARTIAAGGEPADGKPVLLGITKASLATESFLSAASFQETTRVLTEAAIKGKEDHLIGLKENVIIGKLIPAGTGLKRYKNIALNTEEVAQEEIEDTIEEIVEENL.

Residues cysteine 60, cysteine 62, cysteine 75, and cysteine 78 each contribute to the Zn(2+) site. Residues aspartate 450, aspartate 452, and aspartate 454 each contribute to the Mg(2+) site. Residues cysteine 791, cysteine 865, cysteine 872, and cysteine 875 each coordinate Zn(2+).

It belongs to the RNA polymerase beta' chain family. The RNAP catalytic core consists of 2 alpha, 1 beta, 1 beta' and 1 omega subunit. When a sigma factor is associated with the core the holoenzyme is formed, which can initiate transcription. Requires Mg(2+) as cofactor. It depends on Zn(2+) as a cofactor.

The enzyme catalyses RNA(n) + a ribonucleoside 5'-triphosphate = RNA(n+1) + diphosphate. DNA-dependent RNA polymerase catalyzes the transcription of DNA into RNA using the four ribonucleoside triphosphates as substrates. In Alkaliphilus oremlandii (strain OhILAs) (Clostridium oremlandii (strain OhILAs)), this protein is DNA-directed RNA polymerase subunit beta'.